Here is a 102-residue protein sequence, read N- to C-terminus: uncharacterized protein (102 aa).

This is an uncharacterized protein from Sinorhizobium fredii (strain NBRC 101917 / NGR234).